The following is a 910-amino-acid chain: MLNFTGQTRRRNVNLGNRTRNSKKDLLEKAKRERERRAQDKLKEDASKTIQKSIRRHFSNVRLFKNTFTSSQLVHMIPAYGGKLIYYISQYDLQQLLKLSHNFLSSYPNSLGNRQLLSLLKLYQDDALVAETLSDLNMDCPTVDEFLDSLSVYLCRASFLSYSSASKLADVIEAWEVMHSSASISIFSISIGSYEKRPFALQFYCILAERNLLPQLINTNPILWDNMAKTYSHCSKGGQKNIAKLLIPNFNNHIAPSVLRSDNDYVLKFYEKAFIDEVIATTANYVSDEDHVKNLMCYIASSPNQSCKNSVLITLLSNKDFVRRLSWEFFHTKFNASKTEAHPLFSVLAQLIDMHLLISTDRELLDYNSVIPIEELKKFTSTLKDFTFRQYWELPKSERNPMLKEAVPLLSKVYERDSRLHFLSTENNPTYWENSEKQFLNLRFYEELQEYEDLYREHLEEESDEDMEKEIDLDKERPPLKSLLLNKMKKRLKSSLRFRKLEILLELPFFIPFEERVDLFYMFIALDKKRLSLDDDHNLINMFTPWASTGMRKQSAIISRDNVLEDAFNAFNSIGERFKASLDVTFINEFGEEAGIDGGGITKEFLTTVSDEGFKDPKHELFRTNDRYELYPSVVYDATKLKYIWFLGKVVGKCLYEHVLIDVSFADFFLKKLLNYSNGFLSSFSDLGSYDSVLYNNLIKLLNMTTDEIKSLDLTFEIDEPESSAKVVDLIPNGSKTYVTKDNVLLYVTKVTDYKLNKRCFKPVSAFHGGLSVIIAPHWMEMFNSIELQMLISGERDNIDLDDLKSNTEYGGYKEEDQTIVDFWEVLNEFKFEEKLNFLKFVTSVPQAPLQGFKALDPKFGIRNAGTEKYRLPTASTCVNLLKLPDYRNKTILREKLLYAINSGARFDLS.

M1 carries the post-translational modification N-acetylmethionine. The disordered stretch occupies residues 1 to 25 (MLNFTGQTRRRNVNLGNRTRNSKKD). Residues 810 to 910 (YGGYKEEDQT…INSGARFDLS (101 aa)) form the HECT domain. C878 serves as the catalytic Glycyl thioester intermediate.

It belongs to the UBE3C family. Interacts with 19S proteasomes.

The protein resides in the cytoplasm. The protein localises to the cytosol. It is found in the nucleus. The enzyme catalyses S-ubiquitinyl-[E2 ubiquitin-conjugating enzyme]-L-cysteine + [acceptor protein]-L-lysine = [E2 ubiquitin-conjugating enzyme]-L-cysteine + N(6)-ubiquitinyl-[acceptor protein]-L-lysine.. The protein operates within protein modification; protein ubiquitination. Non-essential E3 ubiquitin-protein ligase that specifically catalyzes 'Lys-29'- and 'Lys-48'-linked polyubiquitin chains. Accepts ubiquitin from an E2 ubiquitin-conjugating enzyme in the form of a thioester and then directly transfers the ubiquitin to targeted substrates. Associates with the proteasome and promotes elongation of ubiquitin chains on substrates bound to the proteasome. Elongation of ubiquitin chains on substrates bound to the proteasome promotes proteasomal processivity. Also promotes ubiquitin elongation of 26S proteasome subunit RPN10. Involved in the stress response required to maintain cell fitness following heat-shock: acts by mediating ubiquitination of cytosolic misfolded proteins, leading to their subsequent degradation. This Saccharomyces cerevisiae (strain ATCC 204508 / S288c) (Baker's yeast) protein is E3 ubiquitin-protein ligase HUL5.